Consider the following 80-residue polypeptide: HssA/B-like protein 2 (80 aa).

The tract at residues 1–29 (MSLLSALTSISKPMNTSSKSSVSSKNVSG) is disordered. A compositionally biased stretch (low complexity) spans 9 to 29 (SISKPMNTSSKSSVSSKNVSG).

This sequence belongs to the hssA/B family.

The protein is HssA/B-like protein 2 (hssl2) of Dictyostelium discoideum (Social amoeba).